The primary structure comprises 704 residues: Elongation factor G (704 aa).

One can recognise a tr-type G domain in the interval 10-290; sequence NKVRNIGIMA…AVVDFLPNPL (281 aa). GTP contacts are provided by residues 19-26, 83-87, and 137-140; these read AHIDAGKT, DTPGH, and NKMD.

It belongs to the TRAFAC class translation factor GTPase superfamily. Classic translation factor GTPase family. EF-G/EF-2 subfamily.

Its subcellular location is the cytoplasm. In terms of biological role, catalyzes the GTP-dependent ribosomal translocation step during translation elongation. During this step, the ribosome changes from the pre-translocational (PRE) to the post-translocational (POST) state as the newly formed A-site-bound peptidyl-tRNA and P-site-bound deacylated tRNA move to the P and E sites, respectively. Catalyzes the coordinated movement of the two tRNA molecules, the mRNA and conformational changes in the ribosome. The protein is Elongation factor G of Paenarthrobacter aurescens (strain TC1).